The chain runs to 432 residues: Probable protein phosphatase 2C 75 (432 aa).

A PPM-type phosphatase domain is found at 44-356 (VACLFTRQGK…DDCAVVCLFL (313 aa)). Mn(2+)-binding residues include Asp80, Gly81, Asp301, and Asp347. The segment at 372 to 408 (SPRMPALSGITRPNSKRVTPDDVDDGSDSNVSGDERS) is disordered.

Belongs to the PP2C family. The cofactor is Mg(2+). Mn(2+) serves as cofactor.

The enzyme catalyses O-phospho-L-seryl-[protein] + H2O = L-seryl-[protein] + phosphate. It carries out the reaction O-phospho-L-threonyl-[protein] + H2O = L-threonyl-[protein] + phosphate. This is Probable protein phosphatase 2C 75 from Oryza sativa subsp. japonica (Rice).